A 121-amino-acid chain; its full sequence is Small ribosomal subunit protein uS13 (121 aa).

The interval Pro-96 to Lys-121 is disordered. Over residues Ala-106 to Lys-121 the composition is skewed to basic residues.

It belongs to the universal ribosomal protein uS13 family. In terms of assembly, part of the 30S ribosomal subunit. Forms a loose heterodimer with protein S19. Forms two bridges to the 50S subunit in the 70S ribosome.

Its function is as follows. Located at the top of the head of the 30S subunit, it contacts several helices of the 16S rRNA. In the 70S ribosome it contacts the 23S rRNA (bridge B1a) and protein L5 of the 50S subunit (bridge B1b), connecting the 2 subunits; these bridges are implicated in subunit movement. Contacts the tRNAs in the A and P-sites. This is Small ribosomal subunit protein uS13 from Streptococcus suis (strain 05ZYH33).